The following is a 318-amino-acid chain: MSFASEVKKELTQIAITDHEMKAELAALARMNGAISFGLGRGLTLDISTENASIARRIYSLLKRAYAVHLDLLVRKKMRLKKNNVYIVRVKQQADKILQDLGILGEGFTMIRSISDSILKDERRARAYLRGAFLAGGSLNNPATSSYHLEIFSLYEEHNAALRSLTNQFDLNAKAIERKKGHILYIKESEKISDFLKLVGATYSMLRFEDVRILKDMRNSVNRLVNCETANLNKTVGAALRQVENIKFLERTVGLDVLPDKLKEIAILRVTHQDVTLQELGEMVESGSISKSGINHRLRKIDQIADKIRNGESMTGAL.

A DNA-binding region (H-T-H motif) is located at residues 276 to 310 (TLQELGEMVESGSISKSGINHRLRKIDQIADKIRN).

It belongs to the WhiA family.

Involved in cell division and chromosome segregation. The polypeptide is Probable cell division protein WhiA (Exiguobacterium sibiricum (strain DSM 17290 / CCUG 55495 / CIP 109462 / JCM 13490 / 255-15)).